We begin with the raw amino-acid sequence, 505 residues long: ATP synthase subunit beta, mitochondrial (505 aa).

Residues 1–31 constitute a mitochondrion transit peptide; sequence MFALRAASKADKNLLPFLGQLSRSHAAKAAK. 183 to 190 lines the ATP pocket; that stretch reads GGAGVGKT.

The protein belongs to the ATPase alpha/beta chains family. As to quaternary structure, F-type ATPases have 2 components, CF(1) - the catalytic core - and CF(0) - the membrane proton channel. CF(1) has five subunits: alpha(3), beta(3), gamma(1), delta(1), epsilon(1). CF(0) has three main subunits: a, b and c.

It localises to the mitochondrion. Its subcellular location is the mitochondrion inner membrane. The catalysed reaction is ATP + H2O + 4 H(+)(in) = ADP + phosphate + 5 H(+)(out). In terms of biological role, mitochondrial membrane ATP synthase (F(1)F(0) ATP synthase or Complex V) produces ATP from ADP in the presence of a proton gradient across the membrane which is generated by electron transport complexes of the respiratory chain. F-type ATPases consist of two structural domains, F(1) - containing the extramembraneous catalytic core, and F(0) - containing the membrane proton channel, linked together by a central stalk and a peripheral stalk. During catalysis, ATP synthesis in the catalytic domain of F(1) is coupled via a rotary mechanism of the central stalk subunits to proton translocation. Subunits alpha and beta form the catalytic core in F(1). Rotation of the central stalk against the surrounding alpha(3)beta(3) subunits leads to hydrolysis of ATP in three separate catalytic sites on the beta subunits. The chain is ATP synthase subunit beta, mitochondrial from Drosophila melanogaster (Fruit fly).